Here is a 322-residue protein sequence, read N- to C-terminus: Probable 5-dehydro-4-deoxyglucarate dehydratase 2 (322 aa).

This sequence belongs to the DapA family.

It catalyses the reaction 5-dehydro-4-deoxy-D-glucarate + H(+) = 2,5-dioxopentanoate + CO2 + H2O. Its pathway is carbohydrate acid metabolism; D-glucarate degradation; 2,5-dioxopentanoate from D-glucarate: step 2/2. This Streptomyces coelicolor (strain ATCC BAA-471 / A3(2) / M145) protein is Probable 5-dehydro-4-deoxyglucarate dehydratase 2.